The following is a 585-amino-acid chain: PiggyBac transposable element-derived protein 4 (585 aa).

A disordered region spans residues 1-73 (MSNPRKRSIP…STSSDSGRSM (73 aa)). Positions 25–40 (DSFDESDFSEIDDSDN) are enriched in acidic residues. Basic and acidic residues predominate over residues 47-61 (EADKIRPLSHLESDG). Positions 62–72 (KSSTSSDSGRS) are enriched in low complexity.

The chain is PiggyBac transposable element-derived protein 4 (PGBD4) from Homo sapiens (Human).